A 93-amino-acid polypeptide reads, in one-letter code: Photosystem I iron-sulfur center (93 aa).

2 consecutive 4Fe-4S ferredoxin-type domains span residues 13 to 43 (KDHE…MVPS) and 50 to 80 (QVVT…IRVY). [4Fe-4S] cluster is bound by residues C23, C26, C29, C33, C60, C63, C66, and C70.

The eukaryotic PSI reaction center is composed of at least 11 subunits. It depends on [4Fe-4S] cluster as a cofactor.

It is found in the plastid. The protein resides in the chloroplast thylakoid membrane. The catalysed reaction is reduced [plastocyanin] + hnu + oxidized [2Fe-2S]-[ferredoxin] = oxidized [plastocyanin] + reduced [2Fe-2S]-[ferredoxin]. Its function is as follows. Apoprotein for the two 4Fe-4S centers FA and FB of photosystem I (PSI); essential for photochemical activity. FB is the terminal electron acceptor of PSI, donating electrons to ferredoxin. The C-terminus interacts with PsaA/B/D and helps assemble the protein into the PSI complex. Required for binding of PsaD and PsaE to PSI. PSI is a plastocyanin-ferredoxin oxidoreductase, converting photonic excitation into a charge separation, which transfers an electron from the donor P700 chlorophyll pair to the spectroscopically characterized acceptors A0, A1, FX, FA and FB in turn. In Bigelowiella natans (Pedinomonas minutissima), this protein is Photosystem I iron-sulfur center.